Consider the following 335-residue polypeptide: Dihydroorotate dehydrogenase (quinone) (335 aa).

FMN-binding positions include 58–62 (AGADK) and Thr82. Lys62 contacts substrate. Position 107 to 111 (107 to 111 (NRNGF)) interacts with substrate. Residues Asn135 and Asn168 each coordinate FMN. Asn168 serves as a coordination point for substrate. Ser171 serves as the catalytic Nucleophile. Asn173 is a substrate binding site. 2 residues coordinate FMN: Lys213 and Gly241. 242–243 (NT) serves as a coordination point for substrate. FMN is bound by residues Gly264, Gly293, and 314-315 (YS).

This sequence belongs to the dihydroorotate dehydrogenase family. Type 2 subfamily. Monomer. It depends on FMN as a cofactor.

Its subcellular location is the cell membrane. It catalyses the reaction (S)-dihydroorotate + a quinone = orotate + a quinol. It participates in pyrimidine metabolism; UMP biosynthesis via de novo pathway; orotate from (S)-dihydroorotate (quinone route): step 1/1. Functionally, catalyzes the conversion of dihydroorotate to orotate with quinone as electron acceptor. The polypeptide is Dihydroorotate dehydrogenase (quinone) (Actinobacillus pleuropneumoniae serotype 5b (strain L20)).